The primary structure comprises 214 residues: Dephospho-CoA kinase (214 aa).

The 195-residue stretch at 20–214 (RIGITGGIAS…KLQLKKLYKF (195 aa)) folds into the DPCK domain. Residue 28–33 (ASGKTI) participates in ATP binding.

Belongs to the CoaE family.

It is found in the cytoplasm. The catalysed reaction is 3'-dephospho-CoA + ATP = ADP + CoA + H(+). The protein operates within cofactor biosynthesis; coenzyme A biosynthesis; CoA from (R)-pantothenate: step 5/5. In terms of biological role, catalyzes the phosphorylation of the 3'-hydroxyl group of dephosphocoenzyme A to form coenzyme A. The protein is Dephospho-CoA kinase of Prochlorococcus marinus (strain NATL2A).